A 260-amino-acid polypeptide reads, in one-letter code: Phosphatidate cytidylyltransferase (260 aa).

The next 7 helical transmembrane spans lie at 9 to 29 (IIAL…LMLF), 46 to 66 (MIKL…IIML), 70 to 90 (AGDW…FILL), 102 to 122 (FMDA…FMYF), 130 to 150 (LHYI…AYIF), 172 to 192 (FIGG…FVDF), and 196 to 216 (IWLL…GDLV).

Belongs to the CDS family.

The protein resides in the cell membrane. It carries out the reaction a 1,2-diacyl-sn-glycero-3-phosphate + CTP + H(+) = a CDP-1,2-diacyl-sn-glycerol + diphosphate. Its pathway is phospholipid metabolism; CDP-diacylglycerol biosynthesis; CDP-diacylglycerol from sn-glycerol 3-phosphate: step 3/3. This Staphylococcus haemolyticus (strain JCSC1435) protein is Phosphatidate cytidylyltransferase (cdsA).